Consider the following 380-residue polypeptide: Guanine nucleotide-binding protein subunit beta (380 aa).

7 WD repeats span residues Gly64–Ala103, Leu106–Gly145, Gly155–Ile195, Gly203–Arg243, Gly247–Val286, Asn296–Asn335, and Ser342–Val380.

This sequence belongs to the WD repeat G protein beta family. In terms of assembly, g proteins are composed of 3 units, alpha, beta and gamma. Interacts with the gamma subunits RGG1 and RGG2.

Its subcellular location is the cell membrane. Its function is as follows. Guanine nucleotide-binding proteins (G proteins) are involved as modulators or transducers in various transmembrane signaling systems. The beta and gamma chains are required for the GTPase activity, for replacement of GDP by GTP, and for G protein-effector interaction. The polypeptide is Guanine nucleotide-binding protein subunit beta (Oryza sativa subsp. indica (Rice)).